The primary structure comprises 87 residues: Phosphoribosyl-ATP pyrophosphatase (87 aa).

This sequence belongs to the PRA-PH family.

It is found in the cytoplasm. The enzyme catalyses 1-(5-phospho-beta-D-ribosyl)-ATP + H2O = 1-(5-phospho-beta-D-ribosyl)-5'-AMP + diphosphate + H(+). It participates in amino-acid biosynthesis; L-histidine biosynthesis; L-histidine from 5-phospho-alpha-D-ribose 1-diphosphate: step 2/9. This Paenarthrobacter aurescens (strain TC1) protein is Phosphoribosyl-ATP pyrophosphatase.